The following is a 122-amino-acid chain: Small ribosomal subunit protein uS13 (122 aa).

The tract at residues P97–K122 is disordered. Over residues Q101–K122 the composition is skewed to basic residues.

Belongs to the universal ribosomal protein uS13 family. Part of the 30S ribosomal subunit. Forms a loose heterodimer with protein S19. Forms two bridges to the 50S subunit in the 70S ribosome.

Its function is as follows. Located at the top of the head of the 30S subunit, it contacts several helices of the 16S rRNA. In the 70S ribosome it contacts the 23S rRNA (bridge B1a) and protein L5 of the 50S subunit (bridge B1b), connecting the 2 subunits; these bridges are implicated in subunit movement. Contacts the tRNAs in the A and P-sites. This chain is Small ribosomal subunit protein uS13, found in Thermosipho melanesiensis (strain DSM 12029 / CIP 104789 / BI429).